Reading from the N-terminus, the 130-residue chain is uncharacterized protein (130 aa).

An N-terminal signal peptide occupies residues 1 to 19; the sequence is MKVLGNILWWAFVGFMAYA.

This is an uncharacterized protein from Escherichia coli (strain K12).